We begin with the raw amino-acid sequence, 223 residues long: Urease accessory protein UreF (223 aa).

It belongs to the UreF family. As to quaternary structure, ureD, UreF and UreG form a complex that acts as a GTP-hydrolysis-dependent molecular chaperone, activating the urease apoprotein by helping to assemble the nickel containing metallocenter of UreC. The UreE protein probably delivers the nickel.

The protein resides in the cytoplasm. Required for maturation of urease via the functional incorporation of the urease nickel metallocenter. The protein is Urease accessory protein UreF of Rhizobium johnstonii (strain DSM 114642 / LMG 32736 / 3841) (Rhizobium leguminosarum bv. viciae).